Here is a 151-residue protein sequence, read N- to C-terminus: Small ribosomal subunit protein uS19 (151 aa).

A2 carries the post-translational modification N-acetylalanine.

The protein belongs to the universal ribosomal protein uS19 family.

Functionally, negatively regulates lifespan. This chain is Small ribosomal subunit protein uS19, found in Caenorhabditis elegans.